A 323-amino-acid polypeptide reads, in one-letter code: Probable cell division protein WhiA (323 aa).

Positions 275–309 (TLKELGEMLTTGQVSKSGINHRLRKLDQIAERLRS) form a DNA-binding region, H-T-H motif.

The protein belongs to the WhiA family.

In terms of biological role, involved in cell division and chromosome segregation. This chain is Probable cell division protein WhiA, found in Listeria monocytogenes serotype 4a (strain HCC23).